The sequence spans 465 residues: 2-halobenzoate 1,2-dioxygenase large subunit (465 aa).

A Rieske domain is found at 56-154; it reads WVFLAHESQV…GFNVDGSHDL (99 aa). Residues Cys-98, His-100, Cys-118, and His-121 each contribute to the [2Fe-2S] cluster site. Fe cation contacts are provided by His-227 and His-232.

It belongs to the bacterial ring-hydroxylating dioxygenase alpha subunit family. In terms of assembly, heterohexamer of 3 large (CbdA) subunits and 3 small (CbdB) subunits. The heterohexamer is part of 2-halobenzoate dioxygenase two component enzyme system. The other component is a NADH:acceptor reductase (CdbC). [2Fe-2S] cluster is required as a cofactor. The cofactor is Fe(2+).

It catalyses the reaction a 2-halobenzoate + NADH + O2 + H(+) = a halide anion + catechol + CO2 + NAD(+). The protein operates within xenobiotic degradation; benzoate degradation via CoA ligation. In terms of biological role, component of 2-halobenzoate dioxygenase multicomponent enzyme system which catalyzes the incorporation of both atoms of molecular oxygen into 2-halobenzoate to form catechol. This chain is 2-halobenzoate 1,2-dioxygenase large subunit (cbdA), found in Burkholderia cepacia (Pseudomonas cepacia).